A 114-amino-acid polypeptide reads, in one-letter code: Translation initiation factor 1A (114 aa).

The 73-residue stretch at 19–91 (SEFRLPGEGE…EKGDIVHKYE (73 aa)) folds into the S1-like domain.

It belongs to the eIF-1A family.

In terms of biological role, seems to be required for maximal rate of protein biosynthesis. Enhances ribosome dissociation into subunits and stabilizes the binding of the initiator Met-tRNA(I) to 40 S ribosomal subunits. In Pyrobaculum aerophilum (strain ATCC 51768 / DSM 7523 / JCM 9630 / CIP 104966 / NBRC 100827 / IM2), this protein is Translation initiation factor 1A (eIF1A).